A 268-amino-acid chain; its full sequence is 4-hydroxy-tetrahydrodipicolinate reductase (268 aa).

NAD(+) is bound by residues 10–15 (GASGRM) and D36. An NADP(+)-binding site is contributed by R37. NAD(+) contacts are provided by residues 99–101 (GTT) and 123–126 (SANM). Catalysis depends on H156, which acts as the Proton donor/acceptor. (S)-2,3,4,5-tetrahydrodipicolinate is bound at residue H157. Catalysis depends on K160, which acts as the Proton donor. 166–167 (GT) lines the (S)-2,3,4,5-tetrahydrodipicolinate pocket.

It belongs to the DapB family.

The protein resides in the cytoplasm. The catalysed reaction is (S)-2,3,4,5-tetrahydrodipicolinate + NAD(+) + H2O = (2S,4S)-4-hydroxy-2,3,4,5-tetrahydrodipicolinate + NADH + H(+). It carries out the reaction (S)-2,3,4,5-tetrahydrodipicolinate + NADP(+) + H2O = (2S,4S)-4-hydroxy-2,3,4,5-tetrahydrodipicolinate + NADPH + H(+). It participates in amino-acid biosynthesis; L-lysine biosynthesis via DAP pathway; (S)-tetrahydrodipicolinate from L-aspartate: step 4/4. In terms of biological role, catalyzes the conversion of 4-hydroxy-tetrahydrodipicolinate (HTPA) to tetrahydrodipicolinate. This chain is 4-hydroxy-tetrahydrodipicolinate reductase, found in Burkholderia mallei (strain NCTC 10247).